Here is a 118-residue protein sequence, read N- to C-terminus: Large ribosomal subunit protein bL19 (118 aa).

It belongs to the bacterial ribosomal protein bL19 family.

Its function is as follows. This protein is located at the 30S-50S ribosomal subunit interface and may play a role in the structure and function of the aminoacyl-tRNA binding site. In Coprothermobacter proteolyticus (strain ATCC 35245 / DSM 5265 / OCM 4 / BT), this protein is Large ribosomal subunit protein bL19.